Consider the following 495-residue polypeptide: MSCFSSRLGASCGVRAFSCASACGPRPGRCCISAAPYRGISCYRGLSGGFGSRSVCGPFRSGSCGRSFGYRSGGVCGPSPPCITTVSVNESLLTPLNLEIDPNAQCVKHEEKEQIKCLNSKFAAFIDKVRFLEQQNKLLETKWQFYQNRKCCESNMEPLFEGYIEALRREAECVEADSGRLAAELNHVQESMEGYKKRYEEEVALRATSENEFVALKKDVDCAYLRKSDLEANAEALTQETDFLRQLYEEETRLLHSHISDTSVVVKMDNSRDLNMDCVVAEIKAQYDDIASRSRAEAESWYRTKCEEMKATVIRHGETLRRTREEINELNRMIQRLTAEIENAKCQNTKLEAAVTQSEQQGEAALTDARCKLAELEGALQKAKQDMACLLKEYQEVMNSKLGLDVEIITYRRLLEGEEQRLCEGVGSVNVCVSSSRGGVTCGGLTYGTTPGRQIASGPSVTGGSITVMAPDSCSPCQPRASSFTCGSSRSVRFA.

The tract at residues 1–111 is head; that stretch reads MSCFSSRLGA…PNAQCVKHEE (111 aa). In terms of domain architecture, IF rod spans 111–422; it reads EKEQIKCLNS…RLLEGEEQRL (312 aa). Positions 112–146 are coil 1A; it reads KEQIKCLNSKFAAFIDKVRFLEQQNKLLETKWQFY. The interval 147–156 is linker 1; it reads QNRKCCESNM. Residues 157 to 257 are coil 1B; sequence EPLFEGYIEA…YEEETRLLHS (101 aa). Positions 258-274 are linker 12; that stretch reads HISDTSVVVKMDNSRDL. Positions 275 to 418 are coil 2; the sequence is NMDCVVAEIK…ITYRRLLEGE (144 aa). The interval 419–494 is tail; that stretch reads EQRLCEGVGS…TCGSSRSVRF (76 aa).

Belongs to the intermediate filament family. As to quaternary structure, heterotetramer of two type I and two type II keratins.

This is Keratin, type II cuticular 87 from Mus musculus (Mouse).